The following is a 228-amino-acid chain: Ribosomal RNA small subunit methyltransferase G (228 aa).

S-adenosyl-L-methionine is bound by residues Gly-89, Leu-94, 140-141, and Arg-159; that span reads VE.

It belongs to the methyltransferase superfamily. RNA methyltransferase RsmG family.

It is found in the cytoplasm. The catalysed reaction is guanosine(527) in 16S rRNA + S-adenosyl-L-methionine = N(7)-methylguanosine(527) in 16S rRNA + S-adenosyl-L-homocysteine. Functionally, specifically methylates the N7 position of guanine in position 527 of 16S rRNA. This chain is Ribosomal RNA small subunit methyltransferase G, found in Burkholderia multivorans (strain ATCC 17616 / 249).